Here is a 349-residue protein sequence, read N- to C-terminus: Phosphoribosylformylglycinamidine cyclo-ligase (349 aa).

Belongs to the AIR synthase family.

The protein localises to the cytoplasm. It carries out the reaction 2-formamido-N(1)-(5-O-phospho-beta-D-ribosyl)acetamidine + ATP = 5-amino-1-(5-phospho-beta-D-ribosyl)imidazole + ADP + phosphate + H(+). Its pathway is purine metabolism; IMP biosynthesis via de novo pathway; 5-amino-1-(5-phospho-D-ribosyl)imidazole from N(2)-formyl-N(1)-(5-phospho-D-ribosyl)glycinamide: step 2/2. In Listeria monocytogenes serotype 4b (strain CLIP80459), this protein is Phosphoribosylformylglycinamidine cyclo-ligase.